The chain runs to 640 residues: 1,4-alpha-glucan branching enzyme GlgB (640 aa).

Asp318 acts as the Nucleophile in catalysis. The active-site Proton donor is Glu371.

The protein belongs to the glycosyl hydrolase 13 family. GlgB subfamily. In terms of assembly, monomer.

It carries out the reaction Transfers a segment of a (1-&gt;4)-alpha-D-glucan chain to a primary hydroxy group in a similar glucan chain.. It participates in glycan biosynthesis; glycogen biosynthesis. Its function is as follows. Catalyzes the formation of the alpha-1,6-glucosidic linkages in glycogen by scission of a 1,4-alpha-linked oligosaccharide from growing alpha-1,4-glucan chains and the subsequent attachment of the oligosaccharide to the alpha-1,6 position. This is 1,4-alpha-glucan branching enzyme GlgB from Francisella tularensis subsp. holarctica (strain LVS).